An 800-amino-acid chain; its full sequence is Putative antiporter subunit mnhA2 (800 aa).

A run of 20 helical transmembrane segments spans residues 1–21 (MSLV…LLMS), 33–53 (IALV…PSVA), 78–98 (GLSL…FFYA), 118–138 (LFMF…MYIF), 167–187 (FMIT…LYIM), 207–227 (GLFI…SAQF), 241–261 (TPVS…FLLL), 273–293 (YIYI…ITAL), 300–320 (GILA…VGIG), 331–351 (IASI…NHAI), 387–407 (LVMT…GFLS), 424–444 (FSLI…IFTF), 472–492 (PWLF…IFFV), 527–547 (GFNI…VLAI), 595–615 (IIMT…RIGL), 627–647 (GALE…LIFI), 651–671 (LTMV…FIAM), 676–696 (LALT…VSFS), 712–732 (IIKI…IFIT), and 768–788 (LDTL…YTLL).

The protein belongs to the CPA3 antiporters (TC 2.A.63) subunit A family. As to quaternary structure, may form a heterooligomeric complex that consists of seven subunits: mnhA2, mnhB2, mnhC2, mnhD2, mnhE2, mnhF2 and mnhG2.

The protein localises to the cell membrane. This is Putative antiporter subunit mnhA2 (mnhA2) from Staphylococcus aureus (strain Mu3 / ATCC 700698).